The primary structure comprises 211 residues: Beta-crystallin B3 (211 aa).

N-acetylmethionine is present on methionine 1. Alanine 2 is modified (N-acetylalanine; in Beta-crystallin B3, N-terminally processed). Positions 2–23 (AEQHGAPEQAAAGKSHGDLGGS) are N-terminal arm. 2 Beta/gamma crystallin 'Greek key' domains span residues 24–63 (YKVILYELENFQGKRCELSAECPSLTDSLLEKVGSIQVES) and 64–108 (GPWL…RPLN). The interval 109–113 (IDSPH) is connecting peptide. Beta/gamma crystallin 'Greek key' domains follow at residues 114 to 155 (HKLH…RAIN) and 156 to 198 (GTWV…RRIR). A C-terminal arm region spans residues 200–211 (QKWHKRGRFPSS).

The protein belongs to the beta/gamma-crystallin family. Homo/heterodimer, or complexes of higher-order. The structure of beta-crystallin oligomers seems to be stabilized through interactions between the N-terminal arms.

Crystallins are the dominant structural components of the vertebrate eye lens. This chain is Beta-crystallin B3 (CRYBB3), found in Homo sapiens (Human).